Reading from the N-terminus, the 657-residue chain is Zinc finger CCCH domain-containing protein 50 (657 aa).

ANK repeat units follow at residues 68-97 (EARTPLMVAATYGSAGVVSLLVGLGGCVDV) and 104-136 (DGATALHCAASGGSRNAVAVVKLLLAAGADPAT). Residues 176-206 (SVASGSSSPPLSSSPDEGNRSPSSRSSSLSP) are compositionally biased toward low complexity. Residues 176–222 (SVASGSSSPPLSSSPDEGNRSPSSRSSSLSPITVDRGKKEYPVDPTL) are disordered. 2 C3H1-type zinc fingers span residues 274–302 (PYTAVPCPNFRRPGGCPSGDSCEFSHGVF) and 311–333 (YRTRLCKEGAACARRICFFAHDE). The interval 507-566 (YSPRALDPSSLAHSPFGGMSPRSPRTMEPTSPLSARVGAPATQRPSVGSPRNSSAWGTVG) is disordered. A compositionally biased stretch (polar residues) spans 549–562 (QRPSVGSPRNSSAW).

This is Zinc finger CCCH domain-containing protein 50 from Oryza sativa subsp. japonica (Rice).